We begin with the raw amino-acid sequence, 230 residues long: MVQKKPINRSLRGRFITFEGGEGAGKSTQIRLLAKRLEKARLRTLVTREPGGSPGAEAIRSALLAGIGKLIGGADAEALLFAAARDDHVRTLIEPALARGEWVLCDRFYDSTRAYQGKLGAVSLDLLNALQQVTIGDMKPDLTVILDIPVEIGLARAAVRRGSETPDRFESEAIDFHRGLREVFRQIAAQEPERCVLIDANAEPEEVADRIWQAVRLRLLEPARAGAKSA.

ATP is bound at residue G20 to S27.

The protein belongs to the thymidylate kinase family.

It catalyses the reaction dTMP + ATP = dTDP + ADP. Phosphorylation of dTMP to form dTDP in both de novo and salvage pathways of dTTP synthesis. The protein is Thymidylate kinase of Rhodopseudomonas palustris (strain ATCC BAA-98 / CGA009).